The primary structure comprises 325 residues: Phenylalanine--tRNA ligase alpha subunit (325 aa).

Residue Glu251 participates in Mg(2+) binding.

Belongs to the class-II aminoacyl-tRNA synthetase family. Phe-tRNA synthetase alpha subunit type 1 subfamily. Tetramer of two alpha and two beta subunits. The cofactor is Mg(2+).

Its subcellular location is the cytoplasm. It catalyses the reaction tRNA(Phe) + L-phenylalanine + ATP = L-phenylalanyl-tRNA(Phe) + AMP + diphosphate + H(+). This is Phenylalanine--tRNA ligase alpha subunit from Thermotoga petrophila (strain ATCC BAA-488 / DSM 13995 / JCM 10881 / RKU-1).